Consider the following 424-residue polypeptide: Enolase (424 aa).

A (2R)-2-phosphoglycerate-binding site is contributed by Gln-162. The Proton donor role is filled by Glu-204. Residues Asp-241, Glu-284, and Asp-311 each contribute to the Mg(2+) site. Lys-336, Arg-365, Ser-366, and Lys-387 together coordinate (2R)-2-phosphoglycerate. Lys-336 (proton acceptor) is an active-site residue.

It belongs to the enolase family. The cofactor is Mg(2+).

The protein resides in the cytoplasm. Its subcellular location is the secreted. It localises to the cell surface. The enzyme catalyses (2R)-2-phosphoglycerate = phosphoenolpyruvate + H2O. The protein operates within carbohydrate degradation; glycolysis; pyruvate from D-glyceraldehyde 3-phosphate: step 4/5. In terms of biological role, catalyzes the reversible conversion of 2-phosphoglycerate (2-PG) into phosphoenolpyruvate (PEP). It is essential for the degradation of carbohydrates via glycolysis. The polypeptide is Enolase (Rhizobium leguminosarum bv. trifolii (strain WSM2304)).